Reading from the N-terminus, the 118-residue chain is MLANYALIGIFLVAAISFPLIPLVLAFFLRPKRPTPLKTSTYECGLEAIGDVHVQFKVQYYLYALAFVIFDIEVIFLYPWAVAFNAVGLYGLIAATIFLLMLFAGLLYEWRKGALEWV.

3 helical membrane-spanning segments follow: residues 8 to 28, 64 to 84, and 87 to 107; these read IGIF…LAFF, ALAF…AVAF, and VGLY…AGLL.

The protein belongs to the complex I subunit 3 family. As to quaternary structure, NDH-1 is composed of 14 different subunits. Subunits NuoA, H, J, K, L, M, N constitute the membrane sector of the complex.

It is found in the cell membrane. The catalysed reaction is a quinone + NADH + 5 H(+)(in) = a quinol + NAD(+) + 4 H(+)(out). Its function is as follows. NDH-1 shuttles electrons from NADH, via FMN and iron-sulfur (Fe-S) centers, to quinones in the respiratory chain. The immediate electron acceptor for the enzyme in this species is believed to be ubiquinone. Couples the redox reaction to proton translocation (for every two electrons transferred, four hydrogen ions are translocated across the cytoplasmic membrane), and thus conserves the redox energy in a proton gradient. This Chloroflexus aurantiacus (strain ATCC 29366 / DSM 635 / J-10-fl) protein is NADH-quinone oxidoreductase subunit A.